The primary structure comprises 114 residues: Iron-sulfur cluster insertion protein ErpA (114 aa).

Residues Cys-42, Cys-106, and Cys-108 each contribute to the iron-sulfur cluster site.

Belongs to the HesB/IscA family. In terms of assembly, homodimer. The cofactor is iron-sulfur cluster.

Required for insertion of 4Fe-4S clusters for at least IspG. In Pasteurella multocida (strain Pm70), this protein is Iron-sulfur cluster insertion protein ErpA.